Reading from the N-terminus, the 350-residue chain is Bifunctional methylenetetrahydrofolate dehydrogenase/cyclohydrolase, mitochondrial (350 aa).

A mitochondrion-targeting transit peptide spans 1–35 (MAAASFITSLVTRLLRSAQSGRLHQRPFHLSAVRN). Lysine 50 is subject to N6-acetyllysine; alternate. Lysine 50 participates in a covalent cross-link: Glycyl lysine isopeptide (Lys-Gly) (interchain with G-Cter in SUMO2); alternate. Substrate contacts are provided by residues 84–88 (YVLNK) and 131–133 (VQL). Residues 200–202 (GRS) and arginine 233 contribute to the NAD(+) site. A substrate-binding site is contributed by 309 to 313 (PGGVG).

Belongs to the tetrahydrofolate dehydrogenase/cyclohydrolase family. Homodimer. Mg(2+) is required as a cofactor.

It is found in the mitochondrion. The enzyme catalyses (6R)-5,10-methylene-5,6,7,8-tetrahydrofolate + NAD(+) = (6R)-5,10-methenyltetrahydrofolate + NADH. The catalysed reaction is (6R)-5,10-methenyltetrahydrofolate + H2O = (6R)-10-formyltetrahydrofolate + H(+). Functionally, although its dehydrogenase activity is NAD-specific, it can also utilize NADP at a reduced efficiency. This chain is Bifunctional methylenetetrahydrofolate dehydrogenase/cyclohydrolase, mitochondrial (MTHFD2), found in Bos taurus (Bovine).